Consider the following 437-residue polypeptide: ATP-dependent protease ATPase subunit HslU (437 aa).

Residues Val18, Gly60–Glu65, Asp250, Glu315, and Arg387 each bind ATP.

Belongs to the ClpX chaperone family. HslU subfamily. A double ring-shaped homohexamer of HslV is capped on each side by a ring-shaped HslU homohexamer. The assembly of the HslU/HslV complex is dependent on binding of ATP.

The protein localises to the cytoplasm. ATPase subunit of a proteasome-like degradation complex; this subunit has chaperone activity. The binding of ATP and its subsequent hydrolysis by HslU are essential for unfolding of protein substrates subsequently hydrolyzed by HslV. HslU recognizes the N-terminal part of its protein substrates and unfolds these before they are guided to HslV for hydrolysis. In Methylobacterium nodulans (strain LMG 21967 / CNCM I-2342 / ORS 2060), this protein is ATP-dependent protease ATPase subunit HslU.